The following is a 182-amino-acid chain: Large ribosomal subunit protein bL17m (182 aa).

Belongs to the bacterial ribosomal protein bL17 family.

The protein localises to the mitochondrion. The polypeptide is Large ribosomal subunit protein bL17m (mrpl17) (Dictyostelium discoideum (Social amoeba)).